The primary structure comprises 158 residues: 2-C-methyl-D-erythritol 2,4-cyclodiphosphate synthase (158 aa).

A divalent metal cation is bound by residues Asp8 and His10. 4-CDP-2-C-methyl-D-erythritol 2-phosphate is bound by residues 8 to 10 (DVH) and 34 to 35 (HS). His42 lines the a divalent metal cation pocket. 4-CDP-2-C-methyl-D-erythritol 2-phosphate-binding positions include 56–58 (DIG), 61–65 (FPDTD), 100–106 (AQVPKMA), 132–135 (TTTE), Phe139, and Arg142.

Belongs to the IspF family. Homotrimer. The cofactor is a divalent metal cation.

It carries out the reaction 4-CDP-2-C-methyl-D-erythritol 2-phosphate = 2-C-methyl-D-erythritol 2,4-cyclic diphosphate + CMP. The protein operates within isoprenoid biosynthesis; isopentenyl diphosphate biosynthesis via DXP pathway; isopentenyl diphosphate from 1-deoxy-D-xylulose 5-phosphate: step 4/6. Functionally, involved in the biosynthesis of isopentenyl diphosphate (IPP) and dimethylallyl diphosphate (DMAPP), two major building blocks of isoprenoid compounds. Catalyzes the conversion of 4-diphosphocytidyl-2-C-methyl-D-erythritol 2-phosphate (CDP-ME2P) to 2-C-methyl-D-erythritol 2,4-cyclodiphosphate (ME-CPP) with a corresponding release of cytidine 5-monophosphate (CMP). The sequence is that of 2-C-methyl-D-erythritol 2,4-cyclodiphosphate synthase from Sodalis glossinidius (strain morsitans).